The chain runs to 65 residues: Large ribosomal subunit protein bL35 (65 aa).

Residues 1–15 (MPKMKTKKSASKRFT) show a composition bias toward basic residues. Disordered stretches follow at residues 1–26 (MPKM…KRGQ) and 38–65 (TKNK…MPYA). The segment covering 45–54 (RGTEGVHETN) has biased composition (basic and acidic residues).

This sequence belongs to the bacterial ribosomal protein bL35 family.

This is Large ribosomal subunit protein bL35 from Ralstonia pickettii (strain 12J).